The following is a 923-amino-acid chain: Probable ribosylation factor GTPase-activating protein cnt6 (923 aa).

Ser207 is subject to Phosphoserine. A compositionally biased stretch (basic and acidic residues) spans 444 to 455 (TTRRDKGREMHR). Positions 444-476 (TTRRDKGREMHRSQVIQTSGRPKSMAPPSPSPI) are disordered. A PH domain is found at 526–632 (KIFKEGLLLV…WIEAICEAAK (107 aa)). In terms of domain architecture, Arf-GAP spans 714-837 (NIFIQMLRKT…AFIDFAGVDA (124 aa)). The C4-type zinc-finger motif lies at 730–754 (CADCGSVKDVTWCSINIPVVLCIEC).

The protein localises to the cytoplasm. Its subcellular location is the cell tip. Functionally, GTPase-activating protein for the ADP ribosylation factor family. The chain is Probable ribosylation factor GTPase-activating protein cnt6 (cnt6) from Schizosaccharomyces pombe (strain 972 / ATCC 24843) (Fission yeast).